Consider the following 275-residue polypeptide: Large ribosomal subunit protein uL2 (275 aa).

Disordered regions lie at residues 36-55 and 224-263; these read GLTGSGGRNNTGRITARRMG and VVMNPIDHPHGGGEGRTSGGRHPVTPWGKPTKGKKTRQNK.

The protein belongs to the universal ribosomal protein uL2 family. As to quaternary structure, part of the 50S ribosomal subunit. Forms a bridge to the 30S subunit in the 70S ribosome.

One of the primary rRNA binding proteins. Required for association of the 30S and 50S subunits to form the 70S ribosome, for tRNA binding and peptide bond formation. It has been suggested to have peptidyltransferase activity; this is somewhat controversial. Makes several contacts with the 16S rRNA in the 70S ribosome. In Rhodospirillum centenum (strain ATCC 51521 / SW), this protein is Large ribosomal subunit protein uL2.